A 382-amino-acid chain; its full sequence is Histidinol-phosphate aminotransferase (382 aa).

The residue at position 215 (lysine 215) is an N6-(pyridoxal phosphate)lysine. Residues 363–382 (NIDNQSKTHSQTSSIRKGTI) are disordered.

It belongs to the class-II pyridoxal-phosphate-dependent aminotransferase family. Histidinol-phosphate aminotransferase subfamily. Homodimer. The cofactor is pyridoxal 5'-phosphate.

It carries out the reaction L-histidinol phosphate + 2-oxoglutarate = 3-(imidazol-4-yl)-2-oxopropyl phosphate + L-glutamate. It functions in the pathway amino-acid biosynthesis; L-histidine biosynthesis; L-histidine from 5-phospho-alpha-D-ribose 1-diphosphate: step 7/9. This chain is Histidinol-phosphate aminotransferase, found in Yersinia pseudotuberculosis serotype O:3 (strain YPIII).